Reading from the N-terminus, the 488-residue chain is Probable indole-3-acetic acid-amido synthetase GH3.6 (488 aa).

Belongs to the IAA-amido conjugating enzyme family. Expressed in roots and callus.

May catalyze the synthesis of indole-3-acetic acid (IAA)-amino acid conjugates, providing a mechanism for the plant to cope with the presence of excess auxin. In Oryza sativa subsp. japonica (Rice), this protein is Probable indole-3-acetic acid-amido synthetase GH3.6 (GH3.6).